A 60-amino-acid polypeptide reads, in one-letter code: ERPLCNECFICDRSGDPRCLCEDHVPQCHEGCHQCEKVDTRSGTTMYQCRSFEYYDCANE.

4 disulfide bridges follow: Cys5–Cys21, Cys11–Cys19, Cys28–Cys35, and Cys32–Cys49.

It belongs to the Bowman-Birk serine protease inhibitor family. In terms of tissue distribution, expressed in bulb (at protein level).

Functionally, serine protease inhibitor. Strongly inhibits trypsin (Ki = 0.22 nM) and very weakly inhibits chymotrypsin (Ki = 1200 nM). Does not inhibit bacterial subtilisin. This Hyacinthus orientalis (Common hyacinth) protein is Bowman-Birk type proteinase inhibitor C1.